Reading from the N-terminus, the 222-residue chain is Peptide methionine sulfoxide reductase MsrA (222 aa).

Cys60 is an active-site residue.

Belongs to the MsrA Met sulfoxide reductase family.

It carries out the reaction L-methionyl-[protein] + [thioredoxin]-disulfide + H2O = L-methionyl-(S)-S-oxide-[protein] + [thioredoxin]-dithiol. The enzyme catalyses [thioredoxin]-disulfide + L-methionine + H2O = L-methionine (S)-S-oxide + [thioredoxin]-dithiol. Its function is as follows. Has an important function as a repair enzyme for proteins that have been inactivated by oxidation. Catalyzes the reversible oxidation-reduction of methionine sulfoxide in proteins to methionine. In Pseudomonas putida (strain ATCC 47054 / DSM 6125 / CFBP 8728 / NCIMB 11950 / KT2440), this protein is Peptide methionine sulfoxide reductase MsrA.